We begin with the raw amino-acid sequence, 119 residues long: uncharacterized protein (119 aa).

It to T.pallidum TP_0127, TP_0315 and TP_0619.

This is an uncharacterized protein from Treponema pallidum (strain Nichols).